We begin with the raw amino-acid sequence, 487 residues long: Glutamyl-tRNA(Gln) amidotransferase subunit A (487 aa).

Residues lysine 77 and serine 152 each act as charge relay system in the active site. Serine 176 (acyl-ester intermediate) is an active-site residue.

The protein belongs to the amidase family. GatA subfamily. As to quaternary structure, heterotrimer of A, B and C subunits.

It carries out the reaction L-glutamyl-tRNA(Gln) + L-glutamine + ATP + H2O = L-glutaminyl-tRNA(Gln) + L-glutamate + ADP + phosphate + H(+). In terms of biological role, allows the formation of correctly charged Gln-tRNA(Gln) through the transamidation of misacylated Glu-tRNA(Gln) in organisms which lack glutaminyl-tRNA synthetase. The reaction takes place in the presence of glutamine and ATP through an activated gamma-phospho-Glu-tRNA(Gln). This is Glutamyl-tRNA(Gln) amidotransferase subunit A from Lactiplantibacillus plantarum (strain ATCC BAA-793 / NCIMB 8826 / WCFS1) (Lactobacillus plantarum).